The sequence spans 387 residues: 3-ketoacyl-CoA thiolase (387 aa).

The Acyl-thioester intermediate role is filled by Cys91. Active-site proton acceptor residues include His343 and Cys373.

This sequence belongs to the thiolase-like superfamily. Thiolase family. In terms of assembly, heterotetramer of two alpha chains (FadB) and two beta chains (FadA).

It is found in the cytoplasm. It catalyses the reaction an acyl-CoA + acetyl-CoA = a 3-oxoacyl-CoA + CoA. It participates in lipid metabolism; fatty acid beta-oxidation. Catalyzes the final step of fatty acid oxidation in which acetyl-CoA is released and the CoA ester of a fatty acid two carbons shorter is formed. In Erwinia tasmaniensis (strain DSM 17950 / CFBP 7177 / CIP 109463 / NCPPB 4357 / Et1/99), this protein is 3-ketoacyl-CoA thiolase.